The chain runs to 266 residues: HLA class II histocompatibility antigen, DRB1 beta chain (266 aa).

The N-terminal stretch at methionine 1–serine 29 is a signal peptide. Residues glycine 30–valine 124 are beta-1. The Extracellular portion of the chain corresponds to glycine 30–lysine 227. Residues cysteine 44 and cysteine 108 are joined by a disulfide bond. Asparagine 48 carries N-linked (GlcNAc...) asparagine glycosylation. The a peptide antigen site is built by aspartate 86, tryptophan 90, histidine 110, asparagine 111, and arginine 122. Positions glutamine 125–lysine 227 are beta-2. The 89-residue stretch at proline 126–threonine 214 folds into the Ig-like C1-type domain. An intrachain disulfide couples cysteine 146 to cysteine 202. Residues methionine 228–isoleucine 248 form a helical membrane-spanning segment. Residues tyrosine 249 to serine 266 are Cytoplasmic-facing. Lysine 254 participates in a covalent cross-link: Glycyl lysine isopeptide (Lys-Gly) (interchain with G-Cter in ubiquitin).

Heterotrimer that consists of an alpha chain HLA-DRA, a beta chain HLA-DRB1 and a peptide (peptide-MHCII). Newly synthesized alpha and beta chains forms a heterodimer (MHCII) that associates with the CD74/invariant chain (Ii) in the endoplasmic reticulum (ER). Ii is a trimer composed of three subunits and each subunit interacts with one MHCII dimer, blocking the peptide-binding cleft. As a result, MHCII molecules cannot bind peptides present in the ER. The complex of MHCII and CD74/Ii is transported in vesicles from ER to Golgi to lysosomes, where it encounters antigenic peptides generated via proteolysis of endocytosed antigens. MHCII dimers are dissociated from CD74/Ii by the combined action of proteolysis and HLA-DM. Lysosomal enzymes such as cathepsin, degrade CD74/Ii leaving a 24 amino acid remnant called class II-associated Ii or CLIP. Interacts (via the peptide binding cleft) with CLIP; this interaction inhibits antigen peptide binding before entry in the endosomal compartment. The displacement of CLIP and replacement by a high affinity peptide in lysosomes is performed by HLA-DM heterodimer. HLA-DM catalyzes CLIP dissociation from MHCII, stabilizes empty MHCII and mediates the selection of high affinity peptides. Interacts with HLA-DM heterodimer; this interaction is direct. Interacts with TCR (via CDR3). Interacts (via beta-2 domain) with CD4 coreceptor (via Ig-like V-type domain); this interaction is of exceptionally low affinity yet necessary for optimal recognition of antigenic peptides. As to quaternary structure, (Microbial infection) Interacts with Staphylococcus aureus enterotoxin A/entA, enterotoxin B/entB, enterotoxin C1/entC1, enterotoxin D/entD and enterotoxin H/entH. Enterotoxins bind outside the peptide-binding cleft of MHCII: enterotoxin H/entH interacts via the beta-1 domain of MHCII and in a zinc-dependent way, whereas enterotoxin B/entB interacts primarily via the alpha-1 domain. In terms of assembly, (Microbial infection) Interacts with Epstein-Barr virus gp42 protein. Ubiquitinated by MARCHF1 and MARCHF8 at Lys-254 leading to sorting into the endosome system and down-regulation of MHCII. In terms of tissue distribution, expressed in professional APCs: monocyte/macrophages, dendritic cells and B cells (at protein level). Expressed in thymic epithelial cells (at protein level).

Its subcellular location is the cell membrane. The protein localises to the endoplasmic reticulum membrane. It is found in the lysosome membrane. The protein resides in the late endosome membrane. It localises to the autolysosome membrane. A beta chain of antigen-presenting major histocompatibility complex class II (MHCII) molecule. In complex with the alpha chain HLA-DRA, displays antigenic peptides on professional antigen presenting cells (APCs) for recognition by alpha-beta T cell receptor (TCR) on HLA-DRB1-restricted CD4-positive T cells. This guides antigen-specific T-helper effector functions, both antibody-mediated immune response and macrophage activation, to ultimately eliminate the infectious agents and transformed cells. Typically presents extracellular peptide antigens of 10 to 30 amino acids that arise from proteolysis of endocytosed antigens in lysosomes. In the tumor microenvironment, presents antigenic peptides that are primarily generated in tumor-resident APCs likely via phagocytosis of apoptotic tumor cells or macropinocytosis of secreted tumor proteins. Presents peptides derived from intracellular proteins that are trapped in autolysosomes after macroautophagy, a mechanism especially relevant for T cell selection in the thymus and central immune tolerance. The selection of the immunodominant epitopes follows two processing modes: 'bind first, cut/trim later' for pathogen-derived antigenic peptides and 'cut first, bind later' for autoantigens/self-peptides. The anchor residue at position 1 of the peptide N-terminus, usually a large hydrophobic residue, is essential for high affinity interaction with MHCII molecules. Functionally, allele DRB1*01:01: Displays an immunodominant epitope derived from Bacillus anthracis pagA/protective antigen, PA (KLPLYISNPNYKVNVYAVT), to both naive and PA-specific memory CD4-positive T cells. Presents immunodominant HIV-1 gag peptide (FRDYVDRFYKTLRAEQASQE) on infected dendritic cells for recognition by TRAV24-TRBV2 TCR on CD4-positive T cells and controls viral load. May present to T-helper 1 cells several HRV-16 epitopes derived from capsid proteins VP1 (PRFSLPFLSIASAYYMFYDG) and VP2 (PHQFINLRSNNSATLIVPYV), contributing to viral clearance. Displays commonly recognized peptides derived from IAV external protein HA (PKYVKQNTLKLAT and SNGNFIAPEYAYKIVK) and from internal proteins M, NP and PB1, with M-derived epitope (GLIYNRMGAVTTEV) being the most immunogenic. Presents a self-peptide derived from COL4A3 (GWISLWKGFSF) to TCR (TRAV14 biased) on CD4-positive, FOXP3-positive regulatory T cells and mediates immune tolerance to self. May present peptides derived from oncofetal trophoblast glycoprotein TPBG 5T4, known to be recognized by both T-helper 1 and regulatory T cells. Displays with low affinity a self-peptide derived from MBP (VHFFKNIVTPRTP). Its function is as follows. Allele DRB1*03:01: May present to T-helper 1 cells an HRV-16 epitope derived from capsid protein VP2 (NEKQPSDDNWLNFDGTLLGN), contributing to viral clearance. Displays self-peptides derived from retinal SAG (NRERRGIALDGKIKHE) and thyroid TG (LSSVVVDPSIRHFDV). Presents viral epitopes derived from HHV-6B gH/U48 and U85 antigens to polyfunctional CD4-positive T cells with cytotoxic activity implicated in control of HHV-6B infection. Presents several immunogenic epitopes derived from C.tetani neurotoxin tetX, playing a role in immune recognition and long-term protection. In terms of biological role, allele DRB1*04:01: Presents an immunodominant bacterial epitope derived from M.tuberculosis esxB/culture filtrate antigen CFP-10 (EISTNIRQAGVQYSR), eliciting CD4-positive T cell effector functions such as IFNG production and cytotoxic activity. May present to T-helper 1 cells an HRV-16 epitope derived from capsid protein VP2 (NEKQPSDDNWLNFDGTLLGN), contributing to viral clearance. Presents tumor epitopes derived from melanoma-associated TYR antigen (QNILLSNAPLGPQFP and DYSYLQDSDPDSFQD), triggering CD4-positive T cell effector functions such as GMCSF production. Displays preferentially citrullinated self-peptides derived from VIM (GVYATR/citSSAVR and SAVRAR/citSSVPGVR) and ACAN (VVLLVATEGR/ CitVRVNSAYQDK). Displays self-peptides derived from COL2A1. Allele DRB1*04:02: Displays native or citrullinated self-peptides derived from VIM. Functionally, allele DRB1*04:04: May present to T-helper 1 cells several HRV-16 epitopes derived from capsid proteins VP1 (HIVMQYMYVPPGAPIPTTRN) and VP2 (RGDSTITSQDVANAVVGYGV), contributing to viral clearance. Displays preferentially citrullinated self-peptides derived from VIM (SAVRAR/citSSVPGVR). Its function is as follows. Allele DRB1*04:05: May present to T-helper 1 cells an immunogenic epitope derived from tumor-associated antigen WT1 (KRYFKLSHLQMHSRKH), likely providing for effective antitumor immunity in a wide range of solid and hematological malignancies. In terms of biological role, allele DRB1*05:01: Presents an immunodominant HIV-1 gag peptide (FRDYVDRFYKTLRAEQASQE) on infected dendritic cells for recognition by TRAV24-TRBV2 TCR on CD4-positive T cells and controls viral load. Allele DRB1*07:01: Upon EBV infection, presents latent antigen EBNA2 peptide (PRSPTVFYNIPPMPLPPSQL) to CD4-positive T cells, driving oligoclonal expansion and selection of a dominant virus-specific memory T cell subset with cytotoxic potential to directly eliminate virus-infected B cells. May present to T-helper 1 cells several HRV-16 epitopes derived from capsid proteins VP1 (PRFSLPFLSIASAYYMFYDG) and VP2 (VPYVNAVPMDSMVRHNNWSL), contributing to viral clearance. In the context of tumor immunesurveillance, may present to T-helper 1 cells an immunogenic epitope derived from tumor-associated antigen WT1 (MTEYKLVVVGAVGVGKSALTIQLI), likely providing for effective antitumor immunity in a wide range of solid and hematological malignancies. In metastatic epithelial tumors, presents to intratumoral CD4-positive T cells a KRAS neoantigen (MTEYKLVVVGAVGVGKSALTIQLI) carrying G12V hotspot driver mutation and may mediate tumor regression. Functionally, allele DRB1*11:01: Displays an immunodominant HIV-1 gag peptide (FRDYVDRFYKTLRAEQASQE) on infected dendritic cells for recognition by TRAV24-TRBV2 TCR on CD4-positive T cells and controls viral load. May present to T-helper 1 cells an HRV-16 epitope derived from capsid protein VP2 (SDRIIQITRGDSTITSQDVA), contributing to viral clearance. Presents several immunogenic epitopes derived from C.tetani neurotoxin tetX, playing a role in immune recognition and longterm protection. In the context of tumor immunesurveillance, may present tumor-derived neoantigens to CD4-positive T cells and trigger anti-tumor helper functions. Its function is as follows. Allele DRB1*13:01: Presents viral epitopes derived from HHV-6B antigens to polyfunctional CD4-positive T cells implicated in control of HHV-6B infection. In terms of biological role, allele DRB1*15:01: May present to T-helper 1 cells an HRV-16 epitope derived from capsid protein VP2 (SNNSATLIVPYVNAVPMDSM), contributing to viral clearance. Displays a self-peptide derived from MBP (ENPVVHFFKNIVTPR). May present to T-helper 1 cells an immunogenic epitope derived from tumor-associated antigen WT1 (KRYFKLSHLQMHSRKH), likely providing for effective antitumor immunity in a wide range of solid and hematological malignancies. Allele DRB1*15:02: Displays an immunodominant HIV-1 gag peptide (FRDYVDRFYKTLRAEQASQE) on infected dendritic cells for recognition by TRAV24-TRBV2 TCR on CD4-positive T cells and controls viral load. May present to T-helper 1 cells an immunogenic epitope derived from tumor-associated antigen WT1 (KRYFKLSHLQMHSRKH), likely providing for effective antitumor immunity in a wide range of solid and hematological malignancies. Functionally, (Microbial infection) Acts as a receptor for Epstein-Barr virus on lymphocytes. The sequence is that of HLA class II histocompatibility antigen, DRB1 beta chain from Homo sapiens (Human).